Reading from the N-terminus, the 848-residue chain is Leucine--tRNA ligase (848 aa).

The short motif at 41–51 (PYPSGRIHMGH) is the 'HIGH' region element. Residues 619–623 (KMSKS) carry the 'KMSKS' region motif. Position 622 (K622) interacts with ATP.

This sequence belongs to the class-I aminoacyl-tRNA synthetase family.

It localises to the cytoplasm. The catalysed reaction is tRNA(Leu) + L-leucine + ATP = L-leucyl-tRNA(Leu) + AMP + diphosphate. This is Leucine--tRNA ligase from Roseobacter denitrificans (strain ATCC 33942 / OCh 114) (Erythrobacter sp. (strain OCh 114)).